A 262-amino-acid chain; its full sequence is Ornithine carbamoyltransferase (262 aa).

Residues 3–7, Gln30, Arg54, and 81–84 contribute to the carbamoyl phosphate site; these read STRTR and HPTQ. L-ornithine-binding positions include Asn114, Asp178, and 182–183; that span reads SM. Carbamoyl phosphate contacts are provided by residues 219–222 and Thr247; that span reads HCLP.

This sequence belongs to the aspartate/ornithine carbamoyltransferase superfamily. OTCase family.

It is found in the cytoplasm. It carries out the reaction carbamoyl phosphate + L-ornithine = L-citrulline + phosphate + H(+). It participates in amino-acid biosynthesis; L-arginine biosynthesis; L-arginine from L-ornithine and carbamoyl phosphate: step 1/3. In terms of biological role, reversibly catalyzes the transfer of the carbamoyl group from carbamoyl phosphate (CP) to the N(epsilon) atom of ornithine (ORN) to produce L-citrulline. The polypeptide is Ornithine carbamoyltransferase (argF) (Neisseria mucosa).